Reading from the N-terminus, the 278-residue chain is Urease accessory protein UreD (278 aa).

The protein belongs to the UreD family. In terms of assembly, ureD, UreF and UreG form a complex that acts as a GTP-hydrolysis-dependent molecular chaperone, activating the urease apoprotein by helping to assemble the nickel containing metallocenter of UreC. The UreE protein probably delivers the nickel.

Its subcellular location is the cytoplasm. In terms of biological role, required for maturation of urease via the functional incorporation of the urease nickel metallocenter. This chain is Urease accessory protein UreD, found in Staphylococcus aureus (strain JH1).